A 282-amino-acid polypeptide reads, in one-letter code: Structure-specific endonuclease subunit slx1 (282 aa).

The 91-residue stretch at 7-97 folds into the GIY-YIG domain; it reads GFYGVYLLFC…RLTHVPRKTK (91 aa). An SLX1-type zinc finger spans residues 191 to 243; the sequence is CRVCYERVQDKDDSLHCFHPGCTLTAHIMCLAKLFLLNEPQNLIPVEGLCPSC.

This sequence belongs to the SLX1 family. In terms of assembly, forms a heterodimer with slx4. It depends on a divalent metal cation as a cofactor.

It localises to the nucleus. In terms of biological role, catalytic subunit of the slx1-slx4 structure-specific endonuclease that resolves DNA secondary structures generated during DNA repair and recombination. Has endonuclease activity towards branched DNA substrates, introducing single-strand cuts in duplex DNA close to junctions with ss-DNA. The sequence is that of Structure-specific endonuclease subunit slx1 (slx1a) from Xenopus laevis (African clawed frog).